The sequence spans 569 residues: Sulfite reductase [NADPH] hemoprotein beta-component (569 aa).

Residues C434, C440, C479, and C483 each coordinate [4Fe-4S] cluster. Residue C483 coordinates siroheme.

The protein belongs to the nitrite and sulfite reductase 4Fe-4S domain family. Alpha(8)-beta(8). The alpha component is a flavoprotein, the beta component is a hemoprotein. It depends on siroheme as a cofactor. The cofactor is [4Fe-4S] cluster.

The enzyme catalyses hydrogen sulfide + 3 NADP(+) + 3 H2O = sulfite + 3 NADPH + 4 H(+). Its pathway is sulfur metabolism; hydrogen sulfide biosynthesis; hydrogen sulfide from sulfite (NADPH route): step 1/1. In terms of biological role, component of the sulfite reductase complex that catalyzes the 6-electron reduction of sulfite to sulfide. This is one of several activities required for the biosynthesis of L-cysteine from sulfate. The chain is Sulfite reductase [NADPH] hemoprotein beta-component from Staphylococcus saprophyticus subsp. saprophyticus (strain ATCC 15305 / DSM 20229 / NCIMB 8711 / NCTC 7292 / S-41).